The chain runs to 118 residues: DNA-binding protein YG5714_1868 (118 aa).

This sequence belongs to the PDCD5 family.

This is DNA-binding protein YG5714_1868 from Saccharolobus islandicus (strain Y.G.57.14 / Yellowstone #1) (Sulfolobus islandicus).